The chain runs to 437 residues: Sodium/bile acid cotransporter 4 (437 aa).

At 1–103 the chain is on the extracellular side; sequence MDGNDNVTLL…LPFWDTPLNH (103 aa). N-linked (GlcNAc...) asparagine glycans are attached at residues asparagine 6, asparagine 18, and asparagine 24. The tract at residues 37–82 is disordered; the sequence is APASSAGPGPGLSLGPGPSFGFSPGPTPTPEPTTSGLAGGAASHGP. Over residues 51–60 the composition is skewed to low complexity; it reads GPGPSFGFSP. Residues 104-124 traverse the membrane as a helical segment; it reads GLNVFVGAALCITMLGLGCTV. Topologically, residues 125-140 are cytoplasmic; the sequence is DVNHFGAHVRRPVGAL. Residues 141–161 traverse the membrane as a helical segment; sequence LAALCQFGLLPLLAFLLALAF. Residues 162–197 lie on the Extracellular side of the membrane; it reads KLDEVAAVAVLLCGCCPGGNLSNLMSLLVDGDMNLS. Asparagine 181 and asparagine 195 each carry an N-linked (GlcNAc...) asparagine glycan. Residues 198–218 traverse the membrane as a helical segment; it reads IIMTISSTLLALVLMPLCLWI. Residues 219-233 are Cytoplasmic-facing; that stretch reads YSWAWINTPIVQLLP. Residues 234–254 traverse the membrane as a helical segment; that stretch reads LGTVTLTLCSTLIPIGLGVFI. Residues 255–267 lie on the Extracellular side of the membrane; sequence RYKYSRVADYIVK. The chain crosses the membrane as a helical span at residues 268 to 288; it reads VSLWSLLVTLVVLFIMTGTML. Over 289–291 the chain is Cytoplasmic; that stretch reads GPE. A helical membrane pass occupies residues 292–312; that stretch reads LLASIPAAVYVIAIFMPLAGY. Over 313–360 the chain is Extracellular; the sequence is ASGYGLATLFHLPPNCKRTVCLETGSQNVQLCTAILKLAFPPQFIGSM. The chain crosses the membrane as a helical span at residues 361 to 381; the sequence is YMFPLLYALFQSAEAGIFVLI. At 382–437 the chain is on the cytoplasmic side; it reads YKMYGSEMLHKRDPLDEDEDTDISYKKLKEEEMADTSYGTVKAENIIMMETAQTSL.

The protein belongs to the bile acid:sodium symporter (BASS) (TC 2.A.28) family. Post-translationally, activated following N-terminal proteolytic cleavage by thrombin and/or proteases. In terms of tissue distribution, highly expressed in brain and small intestine, and moderately expressed in colon, heart, prostate, and testis. Very low levels were detected in kidney, liver, ovary, placenta, spleen, and thymus.

The protein resides in the cell membrane. Functionally, transporter for bile acids. This chain is Sodium/bile acid cotransporter 4 (SLC10A4), found in Homo sapiens (Human).